Consider the following 655-residue polypeptide: MGNGMCSRKQKRIFQTLLLLTVVFGFLYGAMLYLELQTQLRKAEAVALKYQQHQDSLSAQLQVVYEHRSRLEKSLQKERLEHKKAKEDFLVYKLEAQETLNKGRQDSNSRYSALNVQHQMLKSQHEELRKQHSDLEEEHRKQGEDFSRTFNDHKQRYLQLQQEKEQELSKLKETVYNLREENRQLRKAHQDIHTQLQDVKTQVAEYKQLKDTLNRIPSFRNPDPVEQQNVTFPHGTHPPQGYNGREKLTGELQEVQPNHEAGPRRMEEKPLSSMQKDAGFQALEEQNQVEPREPEERQVEEEHRKALEEEEMEQVGQAEHLEEEHDPSPEEQDRDWRDQQGQNAAHLLDGHPQAEVEHSTKAATNFQSPYEEQLEQQRLAARRDEEAQRLREHQEALHQQRLHGQLLRQQQQQQFLAREMAQQKQVAHEDGQQQHQEQLRQQAHYNAVENDIAQGVEDQGIPEEEGGAYDRDNQRQDEAEGDPGNRQELREPGHQEGDPEVEADRAAVEDINPADDPNNQGEDEFEEAEQVREENLPEESEEQKQSEAKQGNVEMDEHLVMAGNPDQQEDNVDEQYQDEGEEEVQEDLTEEKKREMEHNVEETYGEHPDDKNNDGEEQGVHNRAHPKGRQEHYEEEEDEEDGAAVAEKSHRRAEM.

Glycine 2 is lipidated: N-myristoyl glycine. The Cytoplasmic segment spans residues 2–12; that stretch reads GNGMCSRKQKR. A helical; Signal-anchor for type II membrane protein membrane pass occupies residues 13–33; sequence IFQTLLLLTVVFGFLYGAMLY. The Lumenal segment spans residues 34-655; the sequence is LELQTQLRKA…AEKSHRRAEM (622 aa). The segment at 38-107 is golgi targeting; the sequence is TQLRKAEAVA…ETLNKGRQDS (70 aa). Residues 66–216 adopt a coiled-coil conformation; it reads EHRSRLEKSL…KQLKDTLNRI (151 aa). Positions 80-175 are endosome targeting; sequence LEHKKAKEDF…QELSKLKETV (96 aa). The interval 122-145 is disordered; sequence KSQHEELRKQHSDLEEEHRKQGED. Positions 123-145 are enriched in basic and acidic residues; sequence SQHEELRKQHSDLEEEHRKQGED. The interval 176 to 220 is golgi targeting; it reads YNLREENRQLRKAHQDIHTQLQDVKTQVAEYKQLKDTLNRIPSFR. Asparagine 229 carries an N-linked (GlcNAc...) asparagine glycan. Disordered stretches follow at residues 256 to 275 and 285 to 655; these read QPNH…SSMQ and EQNQ…RAEM. Composition is skewed to basic and acidic residues over residues 261–270, 290–307, 319–328, and 348–360; these read AGPRRMEEKP, EPRE…RKAL, EHLEEEHDPS, and LDGH…EHST. Serine 328 carries the post-translational modification Phosphoserine. Residues 361 to 370 are compositionally biased toward polar residues; sequence KAATNFQSPY. Residues 381 to 398 are compositionally biased toward basic and acidic residues; sequence ARRDEEAQRLREHQEALH. Composition is skewed to low complexity over residues 399–423 and 433–442; these read QQRL…MAQQ and QQHQEQLRQQ. Residues 468–508 are compositionally biased toward basic and acidic residues; it reads AYDRDNQRQDEAEGDPGNRQELREPGHQEGDPEVEADRAAV. At serine 540 the chain carries Phosphoserine. Over residues 567-589 the composition is skewed to acidic residues; the sequence is QQEDNVDEQYQDEGEEEVQEDLT. Position 576 is a phosphotyrosine (tyrosine 576). Position 589 is a phosphothreonine (threonine 589). Basic and acidic residues predominate over residues 590–620; it reads EEKKREMEHNVEETYGEHPDDKNNDGEEQGV. A Phosphotyrosine modification is found at tyrosine 633. The span at 633–642 shows a compositional bias: acidic residues; it reads YEEEEDEEDG.

Belongs to the GOLIM4 family. In terms of processing, phosphorylated by c-AMP-dependent kinases most probably in its lumenal part. O-glycosylated; modified by sialic acid residues. Post-translationally, N-glycosylated; N-glycans are of the complex type and modified by sialic acid residues. Expressed by spermatozoa (at protein level).

The protein resides in the golgi apparatus. Its subcellular location is the golgi stack membrane. It localises to the endosome membrane. The protein localises to the membrane. Plays a role in endosome to Golgi protein trafficking; mediates protein transport along the late endosome-bypass pathway from the early endosome to the Golgi. In Mus musculus (Mouse), this protein is Golgi integral membrane protein 4 (Golim4).